A 437-amino-acid polypeptide reads, in one-letter code: MSLLQLTASITKAAADLDDATNNAAKASEIESKAKTALLDAAERLVLAYRSPRQWLIDLSFQHCATASLQMIMKYRLHHAVPKQGSRSFAEIAEIITTPDQPGKLPESLVGRLLQHAMSFGLFTPAASGRVAHNDASLLLVTDPDLEAWVYLCSNVAYPAGAQLPKAIEQYGASSEPSETAYSVSIGRRISQFERFREPDGHAEHEMFARAMKGISAGGAYDVGHVVDGGYPWHELPEGTLVVDVGGGPGHVAIALARKYPQLLFEVQDLVETVEFGAKNCPKDLQHRVSFRAQDFFKPQPQRETDSRTIVYFARFILHDWSDKYAGQIVEPLAQAMRPQDRLILNEVVVPEPSVEQRIERKSHDRDLLMLMNLNGRERTLVAFEGLFEVVSPRLRVEKVHKPTTGGELSLITASVDKLTGRKSAGGDIFGANVDEA.

S-adenosyl-L-methionine is bound at residue aspartate 269. Histidine 319 acts as the Proton acceptor in catalysis.

This sequence belongs to the class I-like SAM-binding methyltransferase superfamily. Cation-independent O-methyltransferase family. COMT subfamily.

The protein operates within secondary metabolite biosynthesis. Functionally, O-methyltransferase; part of the gene cluster that mediates the biosynthesis of elsinochrome C, a perelyenequinone phytotoxin structurally similar to cercosporin. The first step of elsinochrome C biosynthesis is performed by the polyketide synthase elcA which catalyzes the formation of nor-toralactone. The starter unit acyltransferase (SAT) domain of elcA initiates polyketide extension by the selective utilization of acetyl-CoA, which is elongated to the heptaketide in the beta-ketoacyl synthase (KS) domain by successive condensations with six malonyl units introduced by the malonyl acyltransferase (MAT) domain. The product template (PT) domain catalyzes C4-C9 and C2-C11 aldol cyclizations and dehydrations to a trihydroxynaphthalene, which is thought to be delivered to the thioesterase (TE) domain for product release. The bifunctional enzyme elcB then methylates nor-toralactone to toralactone before conducting an unusual oxidative aromatic ring opening. The next step in perylenequinone biosynthesis is an O-methylation at the nascent OH-6 of the elcB product performed by the O-methyltransferase elcD. The oxidative coupling of the two monomeric naphthol units in perylenequinone biosynthesis is catalyzed by the FAD-dependent monooxygenase elcE and the multicopper oxidase elcG. ElcG might catalyze the first intermolecular coupling in a regio- and stereo-selective manner via a phenol radical coupling mechanism and the elcE could forge the second C-C bond intramolecularly via a hydride transfer mechanism. The fasciclin domain-containing protein elcF might also play a role duting this step. The last piece of the puzzle in the biosynthesis of elsinochrome C is the additional annulation by enolate coupling to afford the dihydrobenzo(ghi)perylenequinone system, catalyzed by the FAD-dependent monooxygenase elcH. This Phaeosphaeria nodorum (strain SN15 / ATCC MYA-4574 / FGSC 10173) (Glume blotch fungus) protein is O-methyltransferase elcB.